The following is a 182-amino-acid chain: Ribosome maturation factor RimM (182 aa).

The PRC barrel domain occupies 103 to 182 (EDDYYWKDLM…RVEVDWDPGF (80 aa)).

This sequence belongs to the RimM family. Binds ribosomal protein uS19.

Its subcellular location is the cytoplasm. Functionally, an accessory protein needed during the final step in the assembly of 30S ribosomal subunit, possibly for assembly of the head region. Essential for efficient processing of 16S rRNA. May be needed both before and after RbfA during the maturation of 16S rRNA. It has affinity for free ribosomal 30S subunits but not for 70S ribosomes. In Yersinia pestis (strain Pestoides F), this protein is Ribosome maturation factor RimM.